A 338-amino-acid polypeptide reads, in one-letter code: Anthranilate phosphoribosyltransferase (338 aa).

5-phospho-alpha-D-ribose 1-diphosphate is bound by residues Gly81, 84 to 85, Thr89, 91 to 94, 109 to 117, and Ala121; these read GD, NIST, and KHGNRALSS. Residue Gly81 coordinates anthranilate. Ser93 contacts Mg(2+). Anthranilate is bound at residue Asn112. An anthranilate-binding site is contributed by Arg167. 2 residues coordinate Mg(2+): Asp225 and Glu226.

The protein belongs to the anthranilate phosphoribosyltransferase family. In terms of assembly, homodimer. Mg(2+) is required as a cofactor.

The catalysed reaction is N-(5-phospho-beta-D-ribosyl)anthranilate + diphosphate = 5-phospho-alpha-D-ribose 1-diphosphate + anthranilate. Its pathway is amino-acid biosynthesis; L-tryptophan biosynthesis; L-tryptophan from chorismate: step 2/5. Catalyzes the transfer of the phosphoribosyl group of 5-phosphorylribose-1-pyrophosphate (PRPP) to anthranilate to yield N-(5'-phosphoribosyl)-anthranilate (PRA). This chain is Anthranilate phosphoribosyltransferase, found in Rhizobium etli (strain ATCC 51251 / DSM 11541 / JCM 21823 / NBRC 15573 / CFN 42).